We begin with the raw amino-acid sequence, 365 residues long: Histidinol-phosphate aminotransferase (365 aa).

Residue lysine 220 is modified to N6-(pyridoxal phosphate)lysine.

It belongs to the class-II pyridoxal-phosphate-dependent aminotransferase family. Histidinol-phosphate aminotransferase subfamily. In terms of assembly, homodimer. Pyridoxal 5'-phosphate is required as a cofactor.

The enzyme catalyses L-histidinol phosphate + 2-oxoglutarate = 3-(imidazol-4-yl)-2-oxopropyl phosphate + L-glutamate. It functions in the pathway amino-acid biosynthesis; L-histidine biosynthesis; L-histidine from 5-phospho-alpha-D-ribose 1-diphosphate: step 7/9. This chain is Histidinol-phosphate aminotransferase (hisC), found in Xylella fastidiosa (strain Temecula1 / ATCC 700964).